The following is a 356-amino-acid chain: MKHKPIDNELKYLDERSRDIFRHIVEAYLNDGEPVGSRNLSRLLQQTLSPATIRNVMSDLEHLGLIYAPHVSAGRMPTQSGLRFFVDAFMEAGDLPNEERENIEMQVKEAGHAQSVEHFLVQASRVLSDLSRGAGLVLATKQEGTLKHIEFVRLDREHALAVLVTQQGEVENRIVHLPEGVTHAQLTEATNFLNAHIQGRTLSEAKEEIACLCAETRAALDDLSHHLVETGLALLGGEGADHKIHLIVRGRSNLLEDVKAEEDLERLRHLFDDLETRESMAQLLDLTDEGSGVRIFIGSENKLFSLSGSSLVVAPYRDSQQRVIGALGVIGPTRLNYARIVPMVDYTAQLVSQLLR.

Belongs to the HrcA family.

Its function is as follows. Negative regulator of class I heat shock genes (grpE-dnaK-dnaJ and groELS operons). Prevents heat-shock induction of these operons. This is Heat-inducible transcription repressor HrcA from Bartonella tribocorum (strain CIP 105476 / IBS 506).